Consider the following 357-residue polypeptide: (4E)-oxalomesaconate Delta-isomerase (357 aa).

This sequence belongs to the PrpF family.

The enzyme catalyses (1E)-4-oxobut-1-ene-1,2,4-tricarboxylate = (3Z)-2-oxo-4-carboxy-3-hexenedioate. The protein operates within secondary metabolite metabolism; lignin degradation. Functionally, contributes to the degradation of lignin at the level of the protocatechuate 4,5-cleavage pathway. Catalyzes the isomerization of the double bond between C4 and C5 in (4E)-oxalomesaconate (OMA) to (3Z)-2-keto-4-carboxy-3-hexenedioate (KCH), where the double bond has migrated between C3 and C4 via a 1,3-allylic isomerization. This Novosphingobium sp. (strain KA1) (Sphingomonas sp. (strain KA1)) protein is (4E)-oxalomesaconate Delta-isomerase.